The sequence spans 351 residues: Protein Maqu_2141 (351 aa).

The protein belongs to the proline racemase family.

In terms of biological role, displays neither proline racemase activity nor trans-4-hydroxy-L-proline (t4LHyp) epimerase activity nor t3LHyp dehydratase activity. This chain is Protein Maqu_2141, found in Marinobacter nauticus (strain ATCC 700491 / DSM 11845 / VT8) (Marinobacter aquaeolei).